A 116-amino-acid chain; its full sequence is Large ribosomal subunit protein bL17 (116 aa).

This sequence belongs to the bacterial ribosomal protein bL17 family. In terms of assembly, part of the 50S ribosomal subunit. Contacts protein L32.

The polypeptide is Large ribosomal subunit protein bL17 (Picosynechococcus sp. (strain ATCC 27264 / PCC 7002 / PR-6) (Agmenellum quadruplicatum)).